Consider the following 198-residue polypeptide: Small ribosomal subunit protein uS5 (198 aa).

The 64-residue stretch at 46–109 folds into the S5 DRBM domain; sequence LEDDVLEISM…NNAKLNIFKV (64 aa).

Belongs to the universal ribosomal protein uS5 family. Part of the 30S ribosomal subunit. Contacts protein S4.

In terms of biological role, with S4 and S12 plays an important role in translational accuracy. This Archaeoglobus fulgidus (strain ATCC 49558 / DSM 4304 / JCM 9628 / NBRC 100126 / VC-16) protein is Small ribosomal subunit protein uS5.